Here is a 76-residue protein sequence, read N- to C-terminus: Protein sprouty homolog 1 (76 aa).

Residues 1–52 form the SPR domain; it reads NPCSCSQSHCCSRYLCMGAMSLFLPCLLCYPPAKGCLKLCRGCYDRVNRPGC.

This sequence belongs to the sprouty family. In terms of tissue distribution, brain and interlimb region.

The protein resides in the cytoplasm. Its subcellular location is the membrane. Functionally, inhibits fibroblast growth factor (FGF)-induced retinal lens fiber differentiation. Inhibits TGFB-induced epithelial-to-mesenchymal transition in lens epithelial cells. This chain is Protein sprouty homolog 1 (SPRY1), found in Gallus gallus (Chicken).